The primary structure comprises 387 residues: Protein SGT1 homolog (387 aa).

3 TPR repeats span residues 1–34 (MEQLKEGNSYFVDEQYDEALKCYDKACLELSNNA), 36–67 (AFFKRSQCHSKLSNLKEALSDINTSIKLDSNN), and 68–101 (SKYYLKKGQLCFELEEFDTALKTFEKGQSIDSEN). Disordered regions lie at residues 110-193 (KSKA…PSSG) and 299-323 (SPAVPSPYASKKDWDKLPNEPEEKL). Residues 118–127 (NPTTTTTTTP) are compositionally biased toward low complexity. The span at 128–138 (TPTPTPTPAPQ) shows a compositional bias: pro residues. Positions 139 to 185 (PVTTTTNPTPIPTTSNTTTTTNNNNNNNNNNNNNNNNNNTTTDSTTT) are enriched in low complexity. In terms of domain architecture, CS spans 193–282 (GNKVRHEWYQ…SRAIKWDTLE (90 aa)). Residues 301–387 (AVPSPYASKK…KGLEFKQYEK (87 aa)) enclose the SGS domain. Positions 308 to 323 (SKKDWDKLPNEPEEKL) are enriched in basic and acidic residues.

This sequence belongs to the SGT1 family.

May play a role in ubiquitination and subsequent proteasomal degradation of target proteins. This Dictyostelium discoideum (Social amoeba) protein is Protein SGT1 homolog (sugt1).